The chain runs to 786 residues: MNDRVLRVLEFNKIKELVKGYAITKSAKEMVLDLKPYDSVYDVKEHLEETKEALDILMRKGNPPFEGLYDVKEAITRAEKGGVLSIEGLLRIGNMLSVTRKLSDFLARKEEEEEHRILEGMREGLIVLRGVESAISKAIVSEDEIADSASDKLYSIRRSLKEKNSSIRDKVNSIVRSNAQYLQDSLYTVRGDRYVIPVKAEYKSQVPGLVHDQSSTGATLFIEPTALVNLNNEIKELMLKERAEIERILAELSALVYKNIDVIKVNFNIIVELDFIFAKAKYGSDLGGTMPIVNEEGVIDLMDARHPLIPKDKVVSSDIYLGREFSTLLITGPNTGGKTVTLKTTGLIELMGLSGLLIPASENSSISFFEEIFADIGDEQSIEQSLSTFSSHMTNIVKIMEKANNKSFVLFDELGAGTDPTEGAALAISILENLRARGCRIMSTTHYSELKGYALKTENVENASVEFNVETLRPTYRLLIGVPGKSNAFEISRRLGLKDNIIEEAKKVISTESLQFEDLIQSLQEKSIKAENDAREAAILRNDAEKYKNRYKEKFERIESVRDNVYADARREAKQILDSAKEEADTILKNMRDLERMGISSDARRKLEAERGKLRDKISDAEARLQKKKEEQKGEELKKIEVGMEALLPSINQKVIVLSKPDNKGEVQVQAGIMKINVKAKDLRVAKETKEEKKIKKREARLNLRQVDPSIDLRGMDSEEACYTADKYLDDAYVAGRGEVTLVHGKGTGVLRKAINDMLKKHPHVKSHRLGEYGEGGTGVTVVILK.

332–339 (GPNTGGKT) lines the ATP pocket. Positions 711–786 (IDLRGMDSEE…GTGVTVVILK (76 aa)) constitute a Smr domain.

The protein belongs to the DNA mismatch repair MutS family. MutS2 subfamily. Homodimer. Binds to stalled ribosomes, contacting rRNA.

Endonuclease that is involved in the suppression of homologous recombination and thus may have a key role in the control of bacterial genetic diversity. Its function is as follows. Acts as a ribosome collision sensor, splitting the ribosome into its 2 subunits. Detects stalled/collided 70S ribosomes which it binds and splits by an ATP-hydrolysis driven conformational change. Acts upstream of the ribosome quality control system (RQC), a ribosome-associated complex that mediates the extraction of incompletely synthesized nascent chains from stalled ribosomes and their subsequent degradation. Probably generates substrates for RQC. The protein is Endonuclease MutS2 of Clostridium perfringens (strain SM101 / Type A).